Reading from the N-terminus, the 517-residue chain is Protein disulfide-isomerase EUG1 (517 aa).

Positions 1–29 (MQVTTRFISAIVSFCLFASFTLAENSARA) are cleaved as a signal peptide. The Thioredoxin 1 domain occupies 30-141 (TPGSDLLVLT…ITQYMIQLYE (112 aa)). Asn-159, Asn-174, Asn-207, Asn-293, and Asn-462 each carry an N-linked (GlcNAc...) asparagine glycan. A Thioredoxin 2 domain is found at 355–487 (YREGTAKPIV…VFEFIKESGT (133 aa)). The Prevents secretion from ER motif lies at 514–517 (HDEL).

The protein belongs to the protein disulfide isomerase family. In terms of assembly, interacts with EPS1. May have O-linked mannose residues.

It localises to the endoplasmic reticulum lumen. It catalyses the reaction Catalyzes the rearrangement of -S-S- bonds in proteins.. Probably interacts with nascent polypeptides in the endoplasmic reticulum. It is an essential gene only in the absence of PDI. Its native disulfide isomerase activity is very low. The protein is Protein disulfide-isomerase EUG1 (EUG1) of Saccharomyces cerevisiae (strain ATCC 204508 / S288c) (Baker's yeast).